The chain runs to 266 residues: Type III pantothenate kinase (266 aa).

An ATP-binding site is contributed by 6–13 (DIGNSRIK). Residues tyrosine 94 and 101–104 (GIDR) each bind substrate. Catalysis depends on aspartate 103, which acts as the Proton acceptor. Aspartate 128 provides a ligand contact to K(+). Residue threonine 131 participates in ATP binding. Threonine 183 lines the substrate pocket.

Belongs to the type III pantothenate kinase family. As to quaternary structure, homodimer. The cofactor is NH4(+). K(+) is required as a cofactor.

It localises to the cytoplasm. It catalyses the reaction (R)-pantothenate + ATP = (R)-4'-phosphopantothenate + ADP + H(+). The protein operates within cofactor biosynthesis; coenzyme A biosynthesis; CoA from (R)-pantothenate: step 1/5. In terms of biological role, catalyzes the phosphorylation of pantothenate (Pan), the first step in CoA biosynthesis. This Nitrosococcus oceani (strain ATCC 19707 / BCRC 17464 / JCM 30415 / NCIMB 11848 / C-107) protein is Type III pantothenate kinase.